Reading from the N-terminus, the 100-residue chain is MQLSPQEKDKLLIFTAALVAERRKARGLKLNYPEAVAYISAAILEGAREGRTVADLMNYGTTLLTRDDVMEGVPEMLTEVQVEATFPDGTKLVTVHTPIR.

It belongs to the urease gamma subunit family. In terms of assembly, heterotrimer of UreA (gamma), UreB (beta) and UreC (alpha) subunits. Three heterotrimers associate to form the active enzyme.

The protein resides in the cytoplasm. The enzyme catalyses urea + 2 H2O + H(+) = hydrogencarbonate + 2 NH4(+). The protein operates within nitrogen metabolism; urea degradation; CO(2) and NH(3) from urea (urease route): step 1/1. The protein is Urease subunit gamma of Thermosynechococcus vestitus (strain NIES-2133 / IAM M-273 / BP-1).